The following is a 182-amino-acid chain: Ribosome maturation factor RimM (182 aa).

A PRC barrel domain is found at Glu-103–Phe-182.

This sequence belongs to the RimM family. Binds ribosomal protein uS19.

The protein localises to the cytoplasm. Functionally, an accessory protein needed during the final step in the assembly of 30S ribosomal subunit, possibly for assembly of the head region. Essential for efficient processing of 16S rRNA. May be needed both before and after RbfA during the maturation of 16S rRNA. It has affinity for free ribosomal 30S subunits but not for 70S ribosomes. In Escherichia coli O139:H28 (strain E24377A / ETEC), this protein is Ribosome maturation factor RimM.